We begin with the raw amino-acid sequence, 72 residues long: Translation initiation factor IF-1 (72 aa).

Residues 1–72 form the S1-like domain; it reads MAKEELLEMR…TKGRITYRFK (72 aa).

The protein belongs to the IF-1 family. Component of the 30S ribosomal translation pre-initiation complex which assembles on the 30S ribosome in the order IF-2 and IF-3, IF-1 and N-formylmethionyl-tRNA(fMet); mRNA recruitment can occur at any time during PIC assembly.

The protein localises to the cytoplasm. Functionally, one of the essential components for the initiation of protein synthesis. Stabilizes the binding of IF-2 and IF-3 on the 30S subunit to which N-formylmethionyl-tRNA(fMet) subsequently binds. Helps modulate mRNA selection, yielding the 30S pre-initiation complex (PIC). Upon addition of the 50S ribosomal subunit IF-1, IF-2 and IF-3 are released leaving the mature 70S translation initiation complex. This chain is Translation initiation factor IF-1, found in Sphingopyxis alaskensis (strain DSM 13593 / LMG 18877 / RB2256) (Sphingomonas alaskensis).